We begin with the raw amino-acid sequence, 127 residues long: Fluoride-specific ion channel FluC (127 aa).

4 consecutive transmembrane segments (helical) span residues 7 to 27 (LLVA…GAWV), 31 to 51 (LGAG…FLIG), 68 to 88 (LFLA…SYET), and 97 to 117 (VGKA…LAFL). Gly-76 and Thr-79 together coordinate Na(+).

The protein belongs to the fluoride channel Fluc/FEX (TC 1.A.43) family.

The protein localises to the cell inner membrane. The catalysed reaction is fluoride(in) = fluoride(out). Na(+) is not transported, but it plays an essential structural role and its presence is essential for fluoride channel function. Its function is as follows. Fluoride-specific ion channel. Important for reducing fluoride concentration in the cell, thus reducing its toxicity. In Thermus thermophilus (strain ATCC BAA-163 / DSM 7039 / HB27), this protein is Fluoride-specific ion channel FluC.